The following is a 493-amino-acid chain: tRNA(Ile)-lysidine synthase, chloroplastic (493 aa).

68–73 (SGGQDS) serves as a coordination point for ATP.

This sequence belongs to the tRNA(Ile)-lysidine synthase family.

It localises to the plastid. Its subcellular location is the chloroplast. It carries out the reaction cytidine(34) in tRNA(Ile2) + L-lysine + ATP = lysidine(34) in tRNA(Ile2) + AMP + diphosphate + H(+). In terms of biological role, ligates lysine onto the cytidine present at position 34 of the AUA codon-specific tRNA(Ile) that contains the anticodon CAU, in an ATP-dependent manner. Cytidine is converted to lysidine, thus changing the amino acid specificity of the tRNA from methionine to isoleucine. In Staurastrum punctulatum (Green alga), this protein is tRNA(Ile)-lysidine synthase, chloroplastic.